A 344-amino-acid chain; its full sequence is MIKILGIESSCDDTAVSIITENREILSNIIISQNTEHAVFGGVVPEIAARSHLSHLDKALKNVLKESNTKLTDISTIAATSGPGLIGGVIVGSMFARSLSSALKKPFIAINHLEGHALTARLTDNIPYPYLLLLASGGHCQFVAVLGLGKYKILGSTIDDAVGEAFDKVAKMLNLAFPGGPEIEKRAKLGDPHKYKFPKPIINSGNCNMSFSGLKTAVRTLIMTLKEINDTVINDIAASFQFTIGEILSSKVQDAIRAYEQITNNFDKKNIVIAGGVAANKYLQKILSSCAKTYGYRLIYPPIHLCTDNAAMIAYAGLERYNNKLFTPLNFCPKARWSLEDISN.

Residues H112 and H116 each coordinate Fe cation. Substrate is bound by residues L134–G138, D167, G180, and N280. D308 contacts Fe cation.

It belongs to the KAE1 / TsaD family. Fe(2+) serves as cofactor.

The protein localises to the cytoplasm. It carries out the reaction L-threonylcarbamoyladenylate + adenosine(37) in tRNA = N(6)-L-threonylcarbamoyladenosine(37) in tRNA + AMP + H(+). Required for the formation of a threonylcarbamoyl group on adenosine at position 37 (t(6)A37) in tRNAs that read codons beginning with adenine. Is involved in the transfer of the threonylcarbamoyl moiety of threonylcarbamoyl-AMP (TC-AMP) to the N6 group of A37, together with TsaE and TsaB. TsaD likely plays a direct catalytic role in this reaction. The sequence is that of tRNA N6-adenosine threonylcarbamoyltransferase from Rickettsia conorii (strain ATCC VR-613 / Malish 7).